Reading from the N-terminus, the 428-residue chain is Histidinol dehydrogenase (428 aa).

3 residues coordinate NAD(+): Tyr125, Gln186, and Asn209. Substrate is bound by residues Ser232, Gln254, and His257. Positions 254 and 257 each coordinate Zn(2+). Active-site proton acceptor residues include Glu322 and His323. The substrate site is built by His323, Asp356, Glu410, and His415. Asp356 is a binding site for Zn(2+). His415 serves as a coordination point for Zn(2+).

This sequence belongs to the histidinol dehydrogenase family. Zn(2+) serves as cofactor.

It catalyses the reaction L-histidinol + 2 NAD(+) + H2O = L-histidine + 2 NADH + 3 H(+). It participates in amino-acid biosynthesis; L-histidine biosynthesis; L-histidine from 5-phospho-alpha-D-ribose 1-diphosphate: step 9/9. Catalyzes the sequential NAD-dependent oxidations of L-histidinol to L-histidinaldehyde and then to L-histidine. This chain is Histidinol dehydrogenase, found in Lactiplantibacillus plantarum (strain ATCC BAA-793 / NCIMB 8826 / WCFS1) (Lactobacillus plantarum).